The chain runs to 349 residues: Cobalt-precorrin-5B C(1)-methyltransferase (349 aa).

It belongs to the CbiD family.

It catalyses the reaction Co-precorrin-5B + S-adenosyl-L-methionine = Co-precorrin-6A + S-adenosyl-L-homocysteine. Its pathway is cofactor biosynthesis; adenosylcobalamin biosynthesis; cob(II)yrinate a,c-diamide from sirohydrochlorin (anaerobic route): step 6/10. Functionally, catalyzes the methylation of C-1 in cobalt-precorrin-5B to form cobalt-precorrin-6A. This chain is Cobalt-precorrin-5B C(1)-methyltransferase, found in Saccharolobus islandicus (strain M.16.27) (Sulfolobus islandicus).